The chain runs to 376 residues: Heptahelical transmembrane protein ADIPOR1 (376 aa).

The Cytoplasmic segment spans residues 1-90; it reads MGEEAAMATM…LSLFSWHNET (90 aa). The disordered stretch occupies residues 20 to 46; it reads PAAAPAPAKGGGSKKKRKQQKREEKRK. The helical transmembrane segment at 91-111 threads the bilayer; the sequence is INIWTHLLGFVLFFGLTVLHL. At 112–179 the chain is on the extracellular side; that stretch reads GQYFPQVADL…AAAAATTRWP (68 aa). Residues 180–200 form a helical membrane-spanning segment; it reads FFVFLAGAMFCLLSSAACHLL. The Cytoplasmic segment spans residues 201 to 216; that stretch reads SCHSHRLNLFLIRLDY. The helical transmembrane segment at 217 to 237 threads the bilayer; it reads TGIAVMIVVSFFPPIYYIFQC. Residues 238–240 lie on the Extracellular side of the membrane; that stretch reads EPR. The chain crosses the membrane as a helical span at residues 241-261; sequence WQVVYLSAITAAGVATVYALM. At 262–274 the chain is on the cytoplasmic side; it reads SPRLSAARYRAHR. The chain crosses the membrane as a helical span at residues 275 to 295; the sequence is ALLFVAMGLSGVVPAAHAVAV. Topologically, residues 296–303 are extracellular; the sequence is NWHEPRRN. A helical transmembrane segment spans residues 304-324; it reads VTLAYEGAMAASYLAGTAFYL. The Cytoplasmic segment spans residues 325-344; the sequence is TRVPERWRPGMFDLCGHSHQ. Residues 345-365 form a helical membrane-spanning segment; the sequence is IFHALVIAGALAHYAAAIVFI. The Extracellular segment spans residues 366-376; it reads QARDEMGCPAP.

This sequence belongs to the ADIPOR family.

Its subcellular location is the membrane. May play a role in abiotic stress response. This is Heptahelical transmembrane protein ADIPOR1 (ADIPOR1) from Oryza sativa subsp. japonica (Rice).